The primary structure comprises 220 residues: Glutathione S-transferase-like protein FUS3 (220 aa).

One can recognise a GST N-terminal domain in the interval 3-84 (SFGTLYTYMP…YVAQSGPQAS (82 aa)). The GST C-terminal domain maps to 90-220 (DAMSSAKIRQ…LIEKRRIGAK (131 aa)).

Belongs to the GST superfamily.

In terms of biological role, glutathione S-transferase-like protein; part of the gene cluster that mediates the biosynthesis of the mycotoxin fusarin C. Within the cluster, FUS1, FUS2, FUS8 and FUS9 are sufficient for fusarin production. The other FUS cluster members are not essential for fusarin C biosynthesis. The polypeptide is Glutathione S-transferase-like protein FUS3 (Gibberella moniliformis (strain M3125 / FGSC 7600) (Maize ear and stalk rot fungus)).